The chain runs to 514 residues: Voltage-gated potassium channel regulatory subunit KCNG1 (514 aa).

Over 1 to 224 (MTLLPGDNSD…DMVEKPHSGL (224 aa)) the chain is Cytoplasmic. Residues 181-196 (EREDEEEALDSEDQES) are compositionally biased toward acidic residues. A disordered region spans residues 181-205 (EREDEEEALDSEDQESEGPSTSEGR). A helical membrane pass occupies residues 225-246 (PGKVFACLSVLFVTVTAVNLSV). The Extracellular segment spans residues 247 to 267 (STLPSLREEEEQGQCSQMCHN). Residues 268–289 (VFIVESVCVGWFSLEFLLRFIQ) form a helical membrane-spanning segment. The Cytoplasmic portion of the chain corresponds to 290–300 (APSKFAFLRSP). The helical transmembrane segment at 301–321 (LTLIDLVAILPYYVTLLVDGA) threads the bilayer. Residues 322-338 (ASSRRKPSTGNSYLDKV) lie on the Extracellular side of the membrane. A helical; Voltage-sensor transmembrane segment spans residues 339-359 (GLVLRVLRALRILYVMRLARH). At 360–374 (SLGLQTLGLTARRCT) the chain is on the cytoplasmic side. A helical transmembrane segment spans residues 375-396 (REFGLLLLFLCVAIALFAPLLY). Residues 397–411 (VIENEMADSPEFTSI) lie on the Extracellular side of the membrane. Positions 412-423 (PACYWWAVITMT) form an intramembrane region, helical. A Selectivity filter motif is present at residues 424–429 (TVGYGD). The stretch at 424–431 (TVGYGDMV) is an intramembrane region. Residues 432 to 438 (PRSTPGQ) lie on the Extracellular side of the membrane. The helical transmembrane segment at 439-467 (VVALSSILSGILLMAFPVTSIFHTFSRSY) threads the bilayer. The Cytoplasmic segment spans residues 468–514 (LELKQEQERVLIRRAQYLIKTKSQLSGMSQDSDILFGSASSDTRDNN).

This sequence belongs to the potassium channel family. G (TC 1.A.1.2) subfamily. Kv6.1/KCNG1 sub-subfamily. In terms of assembly, heterotetramer with KCNB1 or KCNB2.

It is found in the cell membrane. In terms of biological role, regulatory alpha-subunit of the voltage-gated potassium (Kv) channel which, when coassembled with KCNB1 or KCNB2, can modulate their expression and their gating kinetics by acting on deactivation upon repolarization and inactivation during maintained depolarization. Potassium channel subunit that does not form functional channels by itself. The polypeptide is Voltage-gated potassium channel regulatory subunit KCNG1 (Rattus norvegicus (Rat)).